The primary structure comprises 124 residues: Small ribosomal subunit protein uS12 (124 aa).

Aspartate 89 is modified (3-methylthioaspartic acid). Residues 104 to 124 (ATGVKDRKQGRSKYGAKRPKE) are disordered. The span at 113–124 (GRSKYGAKRPKE) shows a compositional bias: basic residues.

Belongs to the universal ribosomal protein uS12 family. In terms of assembly, part of the 30S ribosomal subunit. Contacts proteins S8 and S17. May interact with IF1 in the 30S initiation complex.

Its function is as follows. With S4 and S5 plays an important role in translational accuracy. Functionally, interacts with and stabilizes bases of the 16S rRNA that are involved in tRNA selection in the A site and with the mRNA backbone. Located at the interface of the 30S and 50S subunits, it traverses the body of the 30S subunit contacting proteins on the other side and probably holding the rRNA structure together. The combined cluster of proteins S8, S12 and S17 appears to hold together the shoulder and platform of the 30S subunit. This chain is Small ribosomal subunit protein uS12, found in Picosynechococcus sp. (strain ATCC 27264 / PCC 7002 / PR-6) (Agmenellum quadruplicatum).